We begin with the raw amino-acid sequence, 370 residues long: tRNA-specific 2-thiouridylase MnmA (370 aa).

ATP contacts are provided by residues 11–18 (GMSGGVDS) and methionine 37. Residues 97–99 (NPD) are interaction with target base in tRNA. Residue cysteine 102 is the Nucleophile of the active site. Cysteine 102 and cysteine 199 are joined by a disulfide. Glycine 126 lines the ATP pocket. The tract at residues 149-151 (KDQ) is interaction with tRNA. The active-site Cysteine persulfide intermediate is cysteine 199. The interval 307 to 308 (RY) is interaction with tRNA.

It belongs to the MnmA/TRMU family.

It is found in the cytoplasm. The catalysed reaction is S-sulfanyl-L-cysteinyl-[protein] + uridine(34) in tRNA + AH2 + ATP = 2-thiouridine(34) in tRNA + L-cysteinyl-[protein] + A + AMP + diphosphate + H(+). Catalyzes the 2-thiolation of uridine at the wobble position (U34) of tRNA, leading to the formation of s(2)U34. This is tRNA-specific 2-thiouridylase MnmA from Staphylococcus carnosus (strain TM300).